The chain runs to 430 residues: KIN17-like protein (430 aa).

The segment at 28–50 adopts a C2H2-type zinc-finger fold; the sequence is CQMCQKQCRDENGFKCHCMSESH. The winged helix-turn-helix (wHTH) stretch occupies residues 51-160; sequence QRQMQVFGQA…KARLKRKRIK (110 aa). Positions 147-183 form a coiled coil; it reads EQAVKARLKRKRIKSDLAEDERQERMIARQIERAQQS. A Nuclear localization signal (NLS) motif is present at residues 155 to 158; it reads KRKR. Disordered stretches follow at residues 179–230 and 261–284; these read RAQQ…ANKA and EEED…GKDA. The segment covering 209-224 has biased composition (acidic residues); it reads EYSDSENDHEGQEEDA. Residues 261 to 278 show a composition bias toward basic and acidic residues; the sequence is EEEDEVSARDKEKEELAK. Residues 283-312 adopt a coiled-coil conformation; the sequence is DAINAAEARRSALDELMKEEEKAKERSNRK. A C-terminal subdomain A region spans residues 319–370; the sequence is GIVVKVMSKSLAEKGYCKQKGVVKRVIDKYVGEIEMLESKHVLRVDQDELET. The C-terminal subdomain B stretch occupies residues 376–427; the sequence is GGLVRIVNGAYRGSNARLLSVDTERFCAKVQVEKGLYDGKVLKAIEYEDICK.

Belongs to the KIN17 family.

Its subcellular location is the nucleus. This Oryza sativa subsp. indica (Rice) protein is KIN17-like protein.